The sequence spans 274 residues: Rhamnulose-1-phosphate aldolase (274 aa).

Residue Glu-117 is part of the active site. The Zn(2+) site is built by His-141, His-143, and His-212.

Belongs to the aldolase class II family. RhaD subfamily. In terms of assembly, homotetramer. Requires Zn(2+) as cofactor.

It localises to the cytoplasm. The enzyme catalyses L-rhamnulose 1-phosphate = (S)-lactaldehyde + dihydroxyacetone phosphate. The protein operates within carbohydrate degradation; L-rhamnose degradation; glycerone phosphate from L-rhamnose: step 3/3. Its function is as follows. Catalyzes the reversible cleavage of L-rhamnulose-1-phosphate to dihydroxyacetone phosphate (DHAP) and L-lactaldehyde. This is Rhamnulose-1-phosphate aldolase from Shigella sonnei (strain Ss046).